We begin with the raw amino-acid sequence, 290 residues long: MKLAVYGKGGIGKSTTSCNISVALSKRGKKVLQIGCDPKHDSTFTLTGFLIPTIIDTLQSKDYHYEDVWPEDVIYKGYGGVDCVEAGGPPAGAGCGGYVVGETVKLLKELNAFDEYDIILFDVLGDVVCGGFAAPLNYADYCLIITDNGFDALFAANRIAASVREKARTHSLRLAGLVGNRTDKRDLIDKYIDCVPMPVLEVLPLIEDIRVSRVKGKTLFEMAEIDKDLAYVCDYYLNIADQLITRPEGVVPKESPDRELFSLLSDFYLNPKSKVGQEKVDQEELDLMIV.

Residues 10-15 and K39 each bind ATP; that span reads GIGKST. Mg(2+) is bound at residue S14. 2 residues coordinate [4Fe-4S] cluster: C95 and C129. 180 to 181 is an ATP binding site; the sequence is NR.

The protein belongs to the NifH/BchL/ChlL family. In terms of assembly, homodimer. Protochlorophyllide reductase is composed of three subunits; ChlL, ChlN and ChlB. [4Fe-4S] cluster is required as a cofactor.

The protein localises to the plastid. It is found in the chloroplast. The enzyme catalyses chlorophyllide a + oxidized 2[4Fe-4S]-[ferredoxin] + 2 ADP + 2 phosphate = protochlorophyllide a + reduced 2[4Fe-4S]-[ferredoxin] + 2 ATP + 2 H2O. It participates in porphyrin-containing compound metabolism; chlorophyll biosynthesis (light-independent). Component of the dark-operative protochlorophyllide reductase (DPOR) that uses Mg-ATP and reduced ferredoxin to reduce ring D of protochlorophyllide (Pchlide) to form chlorophyllide a (Chlide). This reaction is light-independent. The L component serves as a unique electron donor to the NB-component of the complex, and binds Mg-ATP. This is Light-independent protochlorophyllide reductase iron-sulfur ATP-binding protein from Pyropia yezoensis (Susabi-nori).